Consider the following 440-residue polypeptide: Probable exopolygalacturonase B (440 aa).

Positions 1–20 (MRLHFLPLVALCATTASSLA) are cleaved as a signal peptide. N-linked (GlcNAc...) asparagine glycans are attached at residues Asn-65, Asn-190, and Asn-230. Residue Asp-260 is the Proton donor of the active site. Residues Cys-262 and Cys-279 are joined by a disulfide bond. 2 N-linked (GlcNAc...) asparagine glycosylation sites follow: Asn-268 and Asn-280. His-283 is a catalytic residue. Asn-307, Asn-334, and Asn-371 each carry an N-linked (GlcNAc...) asparagine glycan. Cys-397 and Cys-403 are disulfide-bonded. The N-linked (GlcNAc...) asparagine glycan is linked to Asn-412.

This sequence belongs to the glycosyl hydrolase 28 family.

It localises to the secreted. The catalysed reaction is [(1-&gt;4)-alpha-D-galacturonosyl](n) + H2O = alpha-D-galacturonate + [(1-&gt;4)-alpha-D-galacturonosyl](n-1). Specific in hydrolyzing the terminal glycosidic bond of polygalacturonic acid and oligogalacturonates. The polypeptide is Probable exopolygalacturonase B (pgxB) (Emericella nidulans (strain FGSC A4 / ATCC 38163 / CBS 112.46 / NRRL 194 / M139) (Aspergillus nidulans)).